A 793-amino-acid polypeptide reads, in one-letter code: Toll-like receptor 6 (793 aa).

A signal peptide spans 1–23; sequence MIKDKESPIRSCHFVYIVALVFG. Residues 24-584 are Extracellular-facing; the sequence is TIIQFSDESE…FQVSELSCNT (561 aa). LRR repeat units lie at residues 54-77, 78-101, 102-122, 123-147, 148-168, 169-196, 197-219, 220-250, 251-277, 278-303, 304-330, 331-354, 355-378, 379-404, 405-428, 429-449, 450-473, 474-495, and 496-519; these read TKVL…FLSG, LRVL…FNHD, LEYL…PITT, TLKH…GNLT, QLNF…LPIA, HLHL…ILNT, KKLH…SANS, LGCL…GGPT, LLNF…WPKP, IEYL…YKTT, LKAL…VFSE, MNIL…EPST, FKFL…TLAR, LETL…DMLS, LETL…SWVG, SIVV…RCLP, PRIK…TGLE, TLQE…GIFS, and SLSI…QSCQ. A glycan (N-linked (GlcNAc...) asparagine) is linked at asparagine 63. The cysteines at positions 117 and 140 are disulfide-linked. N-linked (GlcNAc...) asparagine glycosylation is present at asparagine 145. A disulfide bond links cysteine 235 and cysteine 265. N-linked (GlcNAc...) asparagine glycosylation is found at asparagine 253 and asparagine 285. A disulfide bridge links cysteine 348 with cysteine 373. The N-linked (GlcNAc...) asparagine glycan is linked to asparagine 359. 2 N-linked (GlcNAc...) asparagine glycosylation sites follow: asparagine 423 and asparagine 434. Cysteine 424 and cysteine 447 are oxidised to a cystine. The region spanning 520–575 is the LRRCT domain; it reads KIRSLKAGNNPFQCSCELRDFIQSVGQVSSDVVEGWPESYKCDYPESYKGTPLKDF. A helical membrane pass occupies residues 585–605; sequence ALLIITIVVPGLVLAVAVTVL. At 606–793 the chain is on the cytoplasmic side; it reads CIYLDLPWYL…KLMEKAAEIH (188 aa). The TIR domain maps to 640–781; that stretch reads LQFHAFISYS…LFWANLRASI (142 aa).

Belongs to the Toll-like receptor family. In terms of assembly, homodimer (via cytoplasmic TIR domain). Heterodimer with TLR2 via their respective extracellular domains. Binds MYD88 via their respective TIR domains. Interacts with CD36, following CD36 stimulation by oxLDL or amyloid-beta 42, and forms a heterodimer with TLR4. The trimeric complex is internalized and triggers inflammatory response. LYN kinase activity facilitates TLR4-TLR6 heterodimerization and signal initiation. The heterodimer TLR2:TLR6 interacts with CD14 and CD36 in response to triacylated lipopeptides. Highest expression levels seen in blood and lymph node, intermediate expression seen in spleen and lowest expression seen in the liver, lung and udder cistern.

The protein resides in the cell membrane. It is found in the cytoplasmic vesicle. The protein localises to the phagosome membrane. Its subcellular location is the membrane raft. It localises to the golgi apparatus. Participates in the innate immune response to Gram-positive bacteria and fungi. Specifically recognizes diacylated and, to a lesser extent, triacylated lipopeptides. In response to diacylated lipopeptides, forms the activation cluster TLR2:TLR6:CD14:CD36, this cluster triggers signaling from the cell surface and subsequently is targeted to the Golgi in a lipid-raft dependent pathway. Acts via MYD88 and TRAF6, leading to NF-kappa-B activation, cytokine secretion and the inflammatory response. Recognizes mycoplasmal macrophage-activating lipopeptide-2kD (MALP-2), soluble tuberculosis factor (STF), phenol-soluble modulin (PSM) and B.burgdorferi outer surface protein A lipoprotein (OspA-L) cooperatively with TLR2. In complex with TLR4, promotes sterile inflammation in monocytes/macrophages in response to oxidized low-density lipoprotein (oxLDL) or amyloid-beta 42. In this context, the initial signal is provided by oxLDL- or amyloid-beta 42-binding to CD36. This event induces the formation of a heterodimer of TLR4 and TLR6, which is rapidly internalized and triggers inflammatory response, leading to the NF-kappa-B-dependent production of CXCL1, CXCL2 and CCL9 cytokines, via MYD88 signaling pathway, and CCL5 cytokine, via TICAM1 signaling pathway, as well as IL1B secretion. This is Toll-like receptor 6 from Bos taurus (Bovine).